The chain runs to 466 residues: UDP-N-acetylmuramoylalanine--D-glutamate ligase (466 aa).

139–145 (GTAGKGG) provides a ligand contact to ATP.

The protein belongs to the MurCDEF family.

It is found in the cytoplasm. The enzyme catalyses UDP-N-acetyl-alpha-D-muramoyl-L-alanine + D-glutamate + ATP = UDP-N-acetyl-alpha-D-muramoyl-L-alanyl-D-glutamate + ADP + phosphate + H(+). It participates in cell wall biogenesis; peptidoglycan biosynthesis. Its function is as follows. Cell wall formation. Catalyzes the addition of glutamate to the nucleotide precursor UDP-N-acetylmuramoyl-L-alanine (UMA). The protein is UDP-N-acetylmuramoylalanine--D-glutamate ligase of Deinococcus geothermalis (strain DSM 11300 / CIP 105573 / AG-3a).